Reading from the N-terminus, the 336-residue chain is Nicotinate-nucleotide--dimethylbenzimidazole phosphoribosyltransferase (336 aa).

Positions 20–41 are disordered; the sequence is GPDAAARAGAEERNGQLTKPPG. Catalysis depends on E304, which acts as the Proton acceptor.

This sequence belongs to the CobT family.

It carries out the reaction 5,6-dimethylbenzimidazole + nicotinate beta-D-ribonucleotide = alpha-ribazole 5'-phosphate + nicotinate + H(+). The protein operates within nucleoside biosynthesis; alpha-ribazole biosynthesis; alpha-ribazole from 5,6-dimethylbenzimidazole: step 1/2. Catalyzes the synthesis of alpha-ribazole-5'-phosphate from nicotinate mononucleotide (NAMN) and 5,6-dimethylbenzimidazole (DMB). This is Nicotinate-nucleotide--dimethylbenzimidazole phosphoribosyltransferase from Ruegeria pomeroyi (strain ATCC 700808 / DSM 15171 / DSS-3) (Silicibacter pomeroyi).